A 321-amino-acid polypeptide reads, in one-letter code: Fe-S cluster assembly protein DRE2 (321 aa).

The N-terminal SAM-like domain stretch occupies residues 1–140 (MNNTAHSMSE…RRPASSSVAE (140 aa)). Polar residues predominate over residues 128–138 (IESRRPASSSV). The interval 128-166 (IESRRPASSSVAEKDSTASSGMGAVKLRRKPNENGGHQQ) is disordered. The linker stretch occupies residues 140-177 (EKDSTASSGMGAVKLRRKPNENGGHQQKKALLWATQPE). [2Fe-2S] cluster-binding residues include cysteine 202, cysteine 217, cysteine 220, and cysteine 222. The tract at residues 202 to 222 (CTVDFSAPRTRRKRACKGCTC) is fe-S binding site A. The disordered stretch occupies residues 239-263 (QLDPSEVGGTGGKRTEVTTTVKGPN). [4Fe-4S] cluster contacts are provided by cysteine 283, cysteine 286, cysteine 294, and cysteine 297. Short sequence motifs (cx2C motif) lie at residues 283-286 (CGSC) and 294-297 (CSSC). Residues 283–297 (CGSCFLGDAFRCSSC) are fe-S binding site B.

It belongs to the anamorsin family. In terms of assembly, monomer. Interacts with TAH18. Interacts with MIA40. It depends on [2Fe-2S] cluster as a cofactor. [4Fe-4S] cluster is required as a cofactor.

The protein localises to the cytoplasm. Its subcellular location is the mitochondrion intermembrane space. Its function is as follows. Component of the cytosolic iron-sulfur (Fe-S) protein assembly (CIA) machinery required for the maturation of extramitochondrial Fe-S proteins. Part of an electron transfer chain functioning in an early step of cytosolic Fe-S biogenesis, facilitating the de novo assembly of a [4Fe-4S] cluster on the scaffold complex CFD1-NBP35. Electrons are transferred to DRE2 from NADPH via the FAD- and FMN-containing protein TAH18. TAH18-DRE2 are also required for the assembly of the diferric tyrosyl radical cofactor of ribonucleotide reductase (RNR), probably by providing electrons for reduction during radical cofactor maturation in the catalytic small subunit RNR2. This is Fe-S cluster assembly protein DRE2 from Malassezia globosa (strain ATCC MYA-4612 / CBS 7966) (Dandruff-associated fungus).